A 304-amino-acid chain; its full sequence is Probable casein kinase I homolog ECU03_0910 (304 aa).

Positions 8-304 (IKLVQKIASG…SDSMGDLEIL (297 aa)) constitute a Protein kinase domain. ATP contacts are provided by residues 14–22 (IASGAFGDI) and K37. Residue D129 is the Proton acceptor of the active site.

It belongs to the protein kinase superfamily. CK1 Ser/Thr protein kinase family. Casein kinase I subfamily.

Its subcellular location is the nucleus. The catalysed reaction is L-seryl-[protein] + ATP = O-phospho-L-seryl-[protein] + ADP + H(+). It catalyses the reaction L-threonyl-[protein] + ATP = O-phospho-L-threonyl-[protein] + ADP + H(+). Its function is as follows. Involved in DNA repair. May regulate the activity of protein(s) involved in double strand break repair caused by gamma rays. The sequence is that of Probable casein kinase I homolog ECU03_0910 from Encephalitozoon cuniculi (strain GB-M1) (Microsporidian parasite).